A 298-amino-acid chain; its full sequence is DDRGK domain-containing protein 1 (298 aa).

The Lumenal portion of the chain corresponds to 1 to 2; sequence ME. Residues 3-23 form a helical membrane-spanning segment; sequence EIFALIVSMILIVAVIPLFFW. Over 24 to 298 the chain is Cytoplasmic; it reads KRRRDARSRE…ISGMEEISVS (275 aa). The disordered stretch occupies residues 31–155; that stretch reads SREEVAEPPQ…EEEKARQAKE (125 aa). Positions 101–155 are enriched in basic and acidic residues; sequence KRQEREAQRQAEEATRESRNTKQDWYAEMRRKKDEEREAEELKLEEEEKARQAKE.

This sequence belongs to the DDRGK1 family.

It is found in the endoplasmic reticulum membrane. Its function is as follows. Substrate adapter for ufmylation, the covalent attachment of the ubiquitin-like modifier UFM1 to substrate proteins. The polypeptide is DDRGK domain-containing protein 1 (Arabidopsis thaliana (Mouse-ear cress)).